The primary structure comprises 660 residues: Acetyl-coenzyme A synthetase (660 aa).

Residues 197-200 and Thr317 contribute to the CoA site; that span reads RGGK. ATP contacts are provided by residues 397–399, 421–426, Asp512, and Arg528; these read GEP and DTFWQT. Ser536 is a binding site for CoA. Residue Arg539 coordinates ATP. Val550 and Val555 together coordinate Mg(2+). Lys625 bears the N6-acetyllysine mark.

It belongs to the ATP-dependent AMP-binding enzyme family. The cofactor is Mg(2+). Acetylated. Deacetylation by the SIR2-homolog deacetylase activates the enzyme.

The enzyme catalyses acetate + ATP + CoA = acetyl-CoA + AMP + diphosphate. Catalyzes the conversion of acetate into acetyl-CoA (AcCoA), an essential intermediate at the junction of anabolic and catabolic pathways. AcsA undergoes a two-step reaction. In the first half reaction, AcsA combines acetate with ATP to form acetyl-adenylate (AcAMP) intermediate. In the second half reaction, it can then transfer the acetyl group from AcAMP to the sulfhydryl group of CoA, forming the product AcCoA. The chain is Acetyl-coenzyme A synthetase from Herminiimonas arsenicoxydans.